The following is a 227-amino-acid chain: Probable methylthioribulose-1-phosphate dehydratase (227 aa).

C87 is a substrate binding site. Zn(2+) contacts are provided by H105 and H107. E129 (proton donor/acceptor) is an active-site residue. H185 is a binding site for Zn(2+).

The protein belongs to the aldolase class II family. MtnB subfamily. Zn(2+) is required as a cofactor.

It is found in the cytoplasm. It carries out the reaction 5-(methylsulfanyl)-D-ribulose 1-phosphate = 5-methylsulfanyl-2,3-dioxopentyl phosphate + H2O. It functions in the pathway amino-acid biosynthesis; L-methionine biosynthesis via salvage pathway; L-methionine from S-methyl-5-thio-alpha-D-ribose 1-phosphate: step 2/6. Catalyzes the dehydration of methylthioribulose-1-phosphate (MTRu-1-P) into 2,3-diketo-5-methylthiopentyl-1-phosphate (DK-MTP-1-P). The polypeptide is Probable methylthioribulose-1-phosphate dehydratase (Drosophila melanogaster (Fruit fly)).